We begin with the raw amino-acid sequence, 381 residues long: Cytochrome b (381 aa).

4 consecutive transmembrane segments (helical) span residues phenylalanine 34–methionine 54, tryptophan 78–isoleucine 99, tryptophan 114–leucine 134, and phenylalanine 179–threonine 199. Heme b-binding residues include histidine 84 and histidine 98. The heme b site is built by histidine 183 and histidine 197. Histidine 202 contacts a ubiquinone. Transmembrane regions (helical) follow at residues methionine 227–threonine 247, leucine 289–histidine 309, methionine 321–serine 341, and phenylalanine 348–proline 368.

The protein belongs to the cytochrome b family. The cytochrome bc1 complex contains 11 subunits: 3 respiratory subunits (MT-CYB, CYC1 and UQCRFS1), 2 core proteins (UQCRC1 and UQCRC2) and 6 low-molecular weight proteins (UQCRH/QCR6, UQCRB/QCR7, UQCRQ/QCR8, UQCR10/QCR9, UQCR11/QCR10 and a cleavage product of UQCRFS1). This cytochrome bc1 complex then forms a dimer. The cofactor is heme b.

Its subcellular location is the mitochondrion inner membrane. Functionally, component of the ubiquinol-cytochrome c reductase complex (complex III or cytochrome b-c1 complex) that is part of the mitochondrial respiratory chain. The b-c1 complex mediates electron transfer from ubiquinol to cytochrome c. Contributes to the generation of a proton gradient across the mitochondrial membrane that is then used for ATP synthesis. The chain is Cytochrome b (MT-CYB) from Nothoprocta perdicaria (Chilean tinamou).